The primary structure comprises 350 residues: MVRIIPMAASSIRPSLACFSDSPRFPISLLSRNLSRTLHVPQSQLFGLTSHKLLRRSVNCLGVAESGKAAQATTQDDLLTWVKNDKRRMLHVVYRVGDMDRTIKFYTECLGMKLLRKRDIPEEKYTNAFLGYGPEDSHFVIELTYNYGVDKYDIGAGFGHFGIAVDDVAKTVELVKAKGGKVSREPGPVKGGKTVIAFIEDPDGYKFELLERGPTPEPLCQVMLRVGDLDRAIKFYEKAFGMELLRTRDNPEYKYTIAMMGYGPEDKFPVLELTYNYGVTEYDKGNAYAQIAIGTDDVYKTAEAIKLFGGKITREPGPLPGISTKITACLDPDGWKSVFVDNIDFLKELE.

The N-terminal 61 residues, 1 to 61 (MVRIIPMAAS…KLLRRSVNCL (61 aa)), are a transit peptide targeting the chloroplast. 2 consecutive VOC domains span residues 88-212 (RMLH…LLER) and 218-342 (PLCQ…FVDN). His91 provides a ligand contact to Zn(2+). Arg95 lines the substrate pocket. Glu142 is a Zn(2+) binding site. The substrate site is built by Asn146 and His160. 2 residues coordinate Zn(2+): His160 and Glu208. Glu208 serves as the catalytic Proton donor/acceptor.

Belongs to the glyoxalase I family. Zn(2+) is required as a cofactor.

It is found in the plastid. The protein localises to the chloroplast stroma. It carries out the reaction (R)-S-lactoylglutathione = methylglyoxal + glutathione. Its pathway is secondary metabolite metabolism; methylglyoxal degradation; (R)-lactate from methylglyoxal: step 1/2. Catalyzes the conversion of hemimercaptal, formed from methylglyoxal and glutathione, to S-lactoylglutathione. This is Probable lactoylglutathione lyase, chloroplastic from Arabidopsis thaliana (Mouse-ear cress).